Reading from the N-terminus, the 490-residue chain is MNNFDTLLQSIARTTVVCVGDLMLDEFVYGEVSRISPEAPAPVIAVQRSEINVGGAGNVARNIAALGARCIFVGLIGDDEAGRTLNAELASEARIEPLLVCDPARPTTRKVRFVSEHFSTHMLRADWETAAAASAEIEQRLLDAILSQLERADIVLLSDYAKGVLTVRVIATVIEAARKLGKRVIVDPKSANFAIYRGATLLTPNRKEFVTATRCAADSMDEIATAAQEAIAFADCEAMLVTQSEHGMTLVPRAGEPIHVPAMPAKVRDVSGAGDTVAAVLAVALAAGADWGTAMRAASAAAAVAVSKNGTAVVTPAELRRKILPHASLAAEDKIIGSDAELDLRLAEWRRDGLRVGFTNGCFDILHPGHVKVLTAARGACDRLIVGLNSDASVRRLKGESRPVQNERARAEVLAALEAVDLVAIFEEDTPLKLITRIEPSVLVKGGDYTREQVVGHEIVAARGGEVLLIDVLPGFSTTSLVEKAREGTS.

A ribokinase region spans residues 1-330 (MNNFDTLLQS…RKILPHASLA (330 aa)). 205–208 (NRKE) provides a ligand contact to ATP. Residue aspartate 275 is part of the active site. The cytidylyltransferase stretch occupies residues 358–490 (FTNGCFDILH…LVEKAREGTS (133 aa)).

This sequence in the N-terminal section; belongs to the carbohydrate kinase PfkB family. It in the C-terminal section; belongs to the cytidylyltransferase family. Homodimer.

It catalyses the reaction D-glycero-beta-D-manno-heptose 7-phosphate + ATP = D-glycero-beta-D-manno-heptose 1,7-bisphosphate + ADP + H(+). The catalysed reaction is D-glycero-beta-D-manno-heptose 1-phosphate + ATP + H(+) = ADP-D-glycero-beta-D-manno-heptose + diphosphate. It participates in nucleotide-sugar biosynthesis; ADP-L-glycero-beta-D-manno-heptose biosynthesis; ADP-L-glycero-beta-D-manno-heptose from D-glycero-beta-D-manno-heptose 7-phosphate: step 1/4. Its pathway is nucleotide-sugar biosynthesis; ADP-L-glycero-beta-D-manno-heptose biosynthesis; ADP-L-glycero-beta-D-manno-heptose from D-glycero-beta-D-manno-heptose 7-phosphate: step 3/4. In terms of biological role, catalyzes the phosphorylation of D-glycero-D-manno-heptose 7-phosphate at the C-1 position to selectively form D-glycero-beta-D-manno-heptose-1,7-bisphosphate. Functionally, catalyzes the ADP transfer from ATP to D-glycero-beta-D-manno-heptose 1-phosphate, yielding ADP-D-glycero-beta-D-manno-heptose. In Rhodopseudomonas palustris (strain HaA2), this protein is Bifunctional protein HldE.